The sequence spans 554 residues: Intraflagellar transport protein 56 (554 aa).

The interval 1-27 (MMLSRAKPAVGGESPHTDKRKKKGRKI) is disordered. Residues 18-27 (DKRKKKGRKI) are compositionally biased toward basic residues. TPR repeat units lie at residues 57–90 (DDTN…ENCN), 92–125 (EVWV…LQNR), 151–184 (KEDQ…NREY), and 468–501 (ANDC…EGKR).

Belongs to the IFT56 family. Component of the IFT complex B. Interacts with IFT46; the interaction is direct. As to expression, high expression detected in testis. Detected also retina, kidney, lung and brain tissue. The expression level is low in spleen. Expressed in the developing liver. Present in the airway epithelial cells and the testes (at protein level).

Its subcellular location is the cell projection. The protein resides in the cilium. In terms of biological role, component of the intraflagellar transport (IFT) complex B required for transport of proteins in the motile cilium. Required for transport of specific ciliary cargo proteins related to motility, while it is neither required for IFT complex B assembly or motion nor for cilium assembly. Required for efficient coupling between the accumulation of GLI2 and GLI3 at the ciliary tips and their dissociation from the negative regulator SUFU. Plays a key role in maintaining the integrity of the IFT complex B and the proper ciliary localization of the IFT complex B components. Not required for IFT complex A ciliary localization or function. Essential for maintaining proper microtubule organization within the ciliary axoneme. This chain is Intraflagellar transport protein 56, found in Mus musculus (Mouse).